We begin with the raw amino-acid sequence, 328 residues long: GTPase Obg (328 aa).

The 159-residue stretch at tyrosine 2 to valine 160 folds into the Obg domain. Residues alanine 161–lysine 326 enclose the OBG-type G domain. Residues glycine 167–serine 174, phenylalanine 192–isoleucine 196, aspartate 213–glycine 216, asparagine 280–aspartate 283, and serine 307–tyrosine 309 each bind GTP. 2 residues coordinate Mg(2+): serine 174 and threonine 194.

The protein belongs to the TRAFAC class OBG-HflX-like GTPase superfamily. OBG GTPase family. In terms of assembly, monomer. Requires Mg(2+) as cofactor.

Its subcellular location is the cytoplasm. In terms of biological role, an essential GTPase which binds GTP, GDP and possibly (p)ppGpp with moderate affinity, with high nucleotide exchange rates and a fairly low GTP hydrolysis rate. Plays a role in control of the cell cycle, stress response, ribosome biogenesis and in those bacteria that undergo differentiation, in morphogenesis control. This chain is GTPase Obg, found in Borreliella afzelii (strain PKo) (Borrelia afzelii).